Reading from the N-terminus, the 178-residue chain is Deoxycytidylate deaminase (178 aa).

The CMP/dCMP-type deaminase domain maps to 14–145 (EWPEYFMAVA…DEATAARLLF (132 aa)). Residue His-84 coordinates Zn(2+). Glu-86 functions as the Proton donor in the catalytic mechanism. Zn(2+) is bound by residues Cys-110 and Cys-113. The residue at position 174 (Ser-174) is a Phosphoserine.

Belongs to the cytidine and deoxycytidylate deaminase family. Homohexamer. Zn(2+) is required as a cofactor.

It carries out the reaction dCMP + H2O + H(+) = dUMP + NH4(+). The catalysed reaction is 5-hydroxymethyl-dCMP + H2O + H(+) = 5-hydroxymethyl-dUMP + NH4(+). With respect to regulation, allosteric enzyme whose activity is greatly influenced by the end products of its metabolic pathway, dCTP and dTTP. Functionally, catalyzes the deamination of dCMP to dUMP, providing the nucleoside monophosphate substrate for the thymidylate synthase/TYMS. Also, part of a nucleotide salvage pathway that eliminates epigenetically modified 5-hydroxymethyl-dCMP (hmdCMP) in a two-step process entailing deamination to cytotoxic 5-hydroxymethyl-dUMP (hmdUMP), followed by its hydrolysis into 5-hydroxymethyluracil (hmU) and 2-deoxy-D-ribose 5-phosphate (deoxyribosephosphate). Catalyzes the first step in that pathway, the deamination of 5-hydroxymethyl-dCMP (hmdCMP). This chain is Deoxycytidylate deaminase, found in Homo sapiens (Human).